The primary structure comprises 382 residues: Succinyl-diaminopimelate desuccinylase (382 aa).

Position 73 (H73) interacts with Zn(2+). Residue D75 is part of the active site. D106 contacts Zn(2+). Residue E140 is the Proton acceptor of the active site. The Zn(2+) site is built by E141, E169, and H355.

It belongs to the peptidase M20A family. DapE subfamily. Homodimer. It depends on Zn(2+) as a cofactor. Co(2+) is required as a cofactor.

It catalyses the reaction N-succinyl-(2S,6S)-2,6-diaminopimelate + H2O = (2S,6S)-2,6-diaminopimelate + succinate. It functions in the pathway amino-acid biosynthesis; L-lysine biosynthesis via DAP pathway; LL-2,6-diaminopimelate from (S)-tetrahydrodipicolinate (succinylase route): step 3/3. In terms of biological role, catalyzes the hydrolysis of N-succinyl-L,L-diaminopimelic acid (SDAP), forming succinate and LL-2,6-diaminopimelate (DAP), an intermediate involved in the bacterial biosynthesis of lysine and meso-diaminopimelic acid, an essential component of bacterial cell walls. This Leptothrix cholodnii (strain ATCC 51168 / LMG 8142 / SP-6) (Leptothrix discophora (strain SP-6)) protein is Succinyl-diaminopimelate desuccinylase.